Consider the following 273-residue polypeptide: DnaJ homolog subfamily C member 27 (273 aa).

The interval methionine 1–lysine 18 is required for interaction with MAPK1. GTP-binding positions include glycine 23–serine 30, aspartate 71–histidine 75, and asparagine 134–aspartate 137. The J domain maps to glycine 217–lysine 273.

Belongs to the small GTPase superfamily. Rab family. In terms of assembly, interacts directly with MAPK1 (wild-type and kinase-deficient forms). Interacts directly (in GTP-bound form) with MAP2K1 (wild-type and kinase-deficient forms).

Its subcellular location is the nucleus. Functionally, GTPase which can activate the MEK/ERK pathway and induce cell transformation when overexpressed. May act as a nuclear scaffold for MAPK1, probably by association with MAPK1 nuclear export signal leading to enhanced ERK1/ERK2 signaling. This Pongo abelii (Sumatran orangutan) protein is DnaJ homolog subfamily C member 27 (DNAJC27).